A 383-amino-acid chain; its full sequence is Succinyl-diaminopimelate desuccinylase (383 aa).

His-73 lines the Zn(2+) pocket. Asp-75 is an active-site residue. Residue Asp-107 coordinates Zn(2+). Catalysis depends on Glu-141, which acts as the Proton acceptor. Positions 142, 170, and 356 each coordinate Zn(2+).

It belongs to the peptidase M20A family. DapE subfamily. In terms of assembly, homodimer. Zn(2+) is required as a cofactor. It depends on Co(2+) as a cofactor.

The enzyme catalyses N-succinyl-(2S,6S)-2,6-diaminopimelate + H2O = (2S,6S)-2,6-diaminopimelate + succinate. The protein operates within amino-acid biosynthesis; L-lysine biosynthesis via DAP pathway; LL-2,6-diaminopimelate from (S)-tetrahydrodipicolinate (succinylase route): step 3/3. In terms of biological role, catalyzes the hydrolysis of N-succinyl-L,L-diaminopimelic acid (SDAP), forming succinate and LL-2,6-diaminopimelate (DAP), an intermediate involved in the bacterial biosynthesis of lysine and meso-diaminopimelic acid, an essential component of bacterial cell walls. This chain is Succinyl-diaminopimelate desuccinylase, found in Pseudomonas syringae pv. syringae (strain B728a).